We begin with the raw amino-acid sequence, 556 residues long: Formate--tetrahydrofolate ligase (556 aa).

An ATP-binding site is contributed by 65 to 72 (TPAGEGKT).

This sequence belongs to the formate--tetrahydrofolate ligase family.

The catalysed reaction is (6S)-5,6,7,8-tetrahydrofolate + formate + ATP = (6R)-10-formyltetrahydrofolate + ADP + phosphate. It functions in the pathway one-carbon metabolism; tetrahydrofolate interconversion. The sequence is that of Formate--tetrahydrofolate ligase from Alkaliphilus oremlandii (strain OhILAs) (Clostridium oremlandii (strain OhILAs)).